An 846-amino-acid chain; its full sequence is Putative transcriptional regulator tpeD (846 aa).

Residues 104 to 166 (KHQSECWQHF…NCRKSVPVSK (63 aa)) form a BED-type; degenerate zinc finger. Positions 734-846 (RAREERDAQQ…RDEDFVYETP (113 aa)) are disordered. A compositionally biased stretch (acidic residues) spans 756–769 (PISDSEEAESEDES). The span at 773-786 (PQSPQASQARSQRS) shows a compositional bias: low complexity. Acidic residues predominate over residues 797–809 (PLIELDGNEEDEV).

The protein resides in the nucleus. Putative transcriptional regulator; part of the gene cluster that mediates the biosynthesis of polyesters containing 2,4-dihydroxy-6-(2-hydroxypropyl)benzoate and 3-hydroxybutyrate moieties, such as talapolyester G, 15G256beta and 15G256beta-2; as well as to oxidized derivatives such as 15G256alpha. This is Putative transcriptional regulator tpeD from Talaromyces stipitatus (strain ATCC 10500 / CBS 375.48 / QM 6759 / NRRL 1006) (Penicillium stipitatum).